Reading from the N-terminus, the 66-residue chain is Large ribosomal subunit protein bL33c (66 aa).

The protein belongs to the bacterial ribosomal protein bL33 family.

It localises to the plastid. The protein localises to the chloroplast. This is Large ribosomal subunit protein bL33c from Welwitschia mirabilis (Tree tumbo).